The following is a 185-amino-acid chain: UPF0397 protein PAM_019 (185 aa).

5 helical membrane-spanning segments follow: residues 13–33 (IGLS…PVGF), 42–62 (AFLA…VGLI), 69–89 (FILF…IGFI), 109–129 (IVYF…FFAP), and 143–163 (VYLQ…VVGI).

The protein belongs to the UPF0397 family.

Its subcellular location is the cell membrane. This is UPF0397 protein PAM_019 from Onion yellows phytoplasma (strain OY-M).